Reading from the N-terminus, the 105-residue chain is Co-chaperonin GroES (105 aa).

This sequence belongs to the GroES chaperonin family. As to quaternary structure, heptamer of 7 subunits arranged in a ring. Interacts with the chaperonin GroEL.

It is found in the cytoplasm. In terms of biological role, together with the chaperonin GroEL, plays an essential role in assisting protein folding. The GroEL-GroES system forms a nano-cage that allows encapsulation of the non-native substrate proteins and provides a physical environment optimized to promote and accelerate protein folding. GroES binds to the apical surface of the GroEL ring, thereby capping the opening of the GroEL channel. The protein is Co-chaperonin GroES of Methylovorus sp. (strain SS1 / DSM 11726).